A 522-amino-acid chain; its full sequence is MEKSQIYLELDGFQQHNFLYPLLFREYIYALAQDHGLNRSTISLENGGYDNKSSSLSGKRLITLLYQQIHLSISANDSNPNQFIGHNNNLYSQMISEGFAVIVEIPFSLQLVSFLEGKEMAKSHNFQSIHSIFPFFEDNFSHLNYVLDVLIPHPIRPEILVQTFRYWVKDASSLHLLRFFLHEYFNWNSLITPKKSISSFSTSNPRFFLFLYNFHVYEYEFLFFFLRNQSSHLRLTSSGVLLERIHFYGKVDYLVEVFANGFQDILRLYKDLFMHYVRYQGKAILASKDTPLLMNKWKNYFVNLWQWHFHVWSQPGRVHINHLHKDSINFLGYLSSRRQNPLVVRSQMLENAFLIDNAMKKFETAVPIIPMIESLTKARFCNPLGNPISKPTWADSSDCHIIGRFVRICRNLSHYHSGSSKKKSLYRIKYILRVSCVKSLVRKHKSTVRVFLKRLGSEFFQXFLTEEEXVLSLIFSRASFTWRXLYXGRVXYXDIICINDLVNHDKLXXXXXXXXXXXXXXX.

The protein belongs to the intron maturase 2 family. MatK subfamily.

The protein localises to the plastid. The protein resides in the chloroplast. Usually encoded in the trnK tRNA gene intron. Probably assists in splicing its own and other chloroplast group II introns. The sequence is that of Maturase K from Sapindus saponaria (Soapberry).